A 287-amino-acid polypeptide reads, in one-letter code: Ribonuclease Z (287 aa).

Histidine 64, histidine 66, aspartate 68, histidine 69, histidine 124, aspartate 191, and histidine 250 together coordinate Zn(2+). The Proton acceptor role is filled by aspartate 68.

Belongs to the RNase Z family. Homodimer. Zn(2+) serves as cofactor.

The catalysed reaction is Endonucleolytic cleavage of RNA, removing extra 3' nucleotides from tRNA precursor, generating 3' termini of tRNAs. A 3'-hydroxy group is left at the tRNA terminus and a 5'-phosphoryl group is left at the trailer molecule.. Functionally, zinc phosphodiesterase, which displays some tRNA 3'-processing endonuclease activity. Probably involved in tRNA maturation, by removing a 3'-trailer from precursor tRNA. In Pyrobaculum islandicum (strain DSM 4184 / JCM 9189 / GEO3), this protein is Ribonuclease Z.